The primary structure comprises 24 residues: Waglerin-3 (24 aa).

Over residues 1–10 (SLGGKPDLRP) the composition is skewed to basic and acidic residues. Positions 1–24 (SLGGKPDLRPCHPPCHYIPRPKPR) are disordered. Cysteines 11 and 15 form a disulfide.

The protein belongs to the waglerin family. As to quaternary structure, waglerin-1 is monomeric. In terms of processing, amidation of the waglerin-1 C-terminus increases the affinity by 2-fold. As to expression, expressed by the venom gland.

The protein localises to the secreted. Its function is as follows. Waglerin-1 selectively blocks the epsilon subunit of muscle nicotinic acetylcholine receptor (nAChR). Also has effects on rodent ionotropic GABA(A) receptors (GABR), since it potentiates I(GABA) in some neurons and depresses I(GABA) in others. In mice, it elicits tachypnea, ocular proptosis, rapid collapse and spasms, whereas no toxic effects on respiration and blood pressure are observed in rats. Functionally, waglerin-3 selectively blocks the epsilon subunit of muscle nicotinic acetylcholine receptor (nAChR). It elicits tachypnea, ocular proptosis, rapid collapse and spasms in mice. It causes death by respiratory failure. The polypeptide is Waglerin-3 (Tropidolaemus wagleri (Wagler's pit viper)).